The primary structure comprises 706 residues: mRNA (2'-O-methyladenosine-N(6)-)-methyltransferase (706 aa).

The segment at 1–34 is disordered; that stretch reads MANENHGSPREGASLLSHSPGTSSQSQPCSPKPV. Positions 16–29 are enriched in polar residues; it reads LSHSPGTSSQSQPC. S30 carries the phosphoserine modification. In terms of domain architecture, WW spans 43–77; that stretch reads ELVHAGWEKCWSRRESRPYYFNRFTNQSLWEMPVL. The segment at 88-148 is disordered; sequence GLNATPLPQD…QSVPSSPSIP (61 aa). The short motif at 109 to 113 is the Nuclear localization signal element; the sequence is KSRKR. Phosphoserine is present on S116. Over residues 132-147 the composition is skewed to low complexity; it reads IPVTPTSQSVPSSPSI. Position 152 is a phosphothreonine (T152). Substrate-binding residues include R234 and R264. S-adenosyl-L-methionine is bound at residue 552–555; it reads NPPF. Substrate contacts are provided by residues E557 and 587-591; that span reads WREPP. 613–615 is a binding site for S-adenosyl-L-methionine; the sequence is FEH. The disordered stretch occupies residues 663-706; that stretch reads TAAYKQSGRSHGSSSSSSSSSSSSEAKDRDSGREQGPSREPHPT. Positions 668-686 match the Nuclear localization signal motif; the sequence is QSGRSHGSSSSSSSSSSSS. Over residues 675 to 686 the composition is skewed to low complexity; sequence SSSSSSSSSSSS. Residues 687 to 706 show a composition bias toward basic and acidic residues; the sequence is EAKDRDSGREQGPSREPHPT.

Belongs to the CAPAM family. Interacts with POLR2A; interacts with the phosphorylated C-terminal domain (CTD) of POLR2A.

The protein localises to the nucleus. The enzyme catalyses a 5'-end (N(7)-methyl 5'-triphosphoguanosine)-(2'-O-methyladenosine) in mRNA + S-adenosyl-L-methionine = a 5'-end (N(7)-methyl 5'-triphosphoguanosine)-(N(6),2'-O-dimethyladenosine) in mRNA + S-adenosyl-L-homocysteine + H(+). With respect to regulation, cap-specific adenosine methyltransferase activity is inhibited by zinc. In terms of biological role, cap-specific adenosine methyltransferase that catalyzes formation of N(6),2'-O-dimethyladenosine cap (m6A(m)) by methylating the adenosine at the second transcribed position of capped mRNAs. Recruited to the early elongation complex of RNA polymerase II (RNAPII) via interaction with POLR2A and mediates formation of m6A(m) co-transcriptionally. This Mus musculus (Mouse) protein is mRNA (2'-O-methyladenosine-N(6)-)-methyltransferase.